The chain runs to 1475 residues: Sterol 3-beta-glucosyltransferase (1475 aa).

Disordered regions lie at residues 1–73 and 94–218; these read MPPP…PPMF and HDRF…EDDK. Low complexity predominate over residues 8 to 17; that stretch reads LPLHGPAGAA. A compositionally biased stretch (basic residues) spans 30–40; that stretch reads RVGKKLQKKRH. Residues 108–118 show a composition bias toward basic and acidic residues; that stretch reads GPQRDSADRSH. The segment covering 156-168 has biased composition (basic residues); the sequence is EKHKRKISGHKLL. One can recognise a GRAM 1 domain in the interval 270–315; sequence QDIFEFDQPEAVIEEYPCWLLQSVLLQGYMYITAKHICFYSYLPKK. Positions 318-413 constitute a PH domain; the sequence is EVVKSGYLSK…WVKSLQRVIF (96 aa). Disordered stretches follow at residues 492–541, 594–636, and 653–715; these read ARLK…TTNK, SSPR…MEEP, and QILR…PVTP. Residues 505 to 531 show a composition bias toward low complexity; that stretch reads QQQQQQHPMQPPMQASARSSMSGSRRA. Polar residues-rich tracts occupy residues 621 to 634 and 653 to 674; these read QQGSTDSYVQSSME and QILRGSDVFQNPTMRRSGSASR. Residues 675 to 686 show a composition bias toward basic and acidic residues; it reads TEVEKQQRRDPR. One can recognise a GRAM 2 domain in the interval 798-901; it reads RFRAHFALPE…RDDCAVTLLQ (104 aa). UDP-alpha-D-glucose-binding residues include serine 989, arginine 990, aspartate 992, alanine 1293, histidine 1295, histidine 1308, serine 1311, glycine 1312, threonine 1313, aspartate 1332, and glutamine 1333. The tract at residues 1413-1475 is disordered; that stretch reads IQVEPDEDEE…RVSPSQQSVA (63 aa). Positions 1416–1425 are enriched in acidic residues; it reads EPDEDEESAE.

It belongs to the glycosyltransferase 28 family.

It localises to the cytoplasm. It is found in the preautophagosomal structure membrane. The catalysed reaction is a sterol + UDP-alpha-D-glucose = a sterol 3-beta-D-glucoside + UDP + H(+). The enzyme catalyses ergosterol + UDP-alpha-D-glucose = ergosteryl 3-beta-D-glucoside + UDP + H(+). Sterol glycosyltransferase responsible for the glycosylation of ergosterol to form ergosterol-glucoside. Mediates autophagic degradation of peroxisomes (pexophagy) and is involved in pathogenesis via peroxisome degradation inside appressoria that are developing into the host invasion stage. This is Sterol 3-beta-glucosyltransferase from Glomerella lagenarium (Anthracnose fungus).